The following is a 93-amino-acid chain: Serine rich endogenous peptide 6 (93 aa).

The first 27 residues, 1–27, serve as a signal peptide directing secretion; sequence MGTKCYSKLRYVVVLVLLLFVFPCSLS. 2 short sequence motifs (SCOOP motif) span residues 48–62 and 73–87; these read GIIA…APNI and ISEA…GGGR. The segment at 52–93 is disordered; that stretch reads GSSPSGQAPNINNNYHGRRLMISEARPSKSKKGGGREPESPG. Residues 53–66 show a composition bias toward polar residues; the sequence is SSPSGQAPNINNNY. Short sequence motifs (sxS motif essential for MIK2 binding) lie at residues 54–56 and 79–81; these read SPS and SKS.

This sequence belongs to the serine rich endogenous peptide (SCOOP) phytocytokine family. In terms of assembly, interacts with MIK2 (via extracellular leucine-rich repeat domain); this interaction triggers the formation of complex between MIK2 and the BAK1/SERK3 and SERK4 coreceptors, and subsequent BAK1 activation by phosphorylation. In terms of tissue distribution, mostly expressed in seedlings shoots, and, to a lower extent, in roots.

The protein localises to the cell membrane. It localises to the secreted. The protein resides in the extracellular space. It is found in the apoplast. In terms of biological role, brassicaceae-specific phytocytokine (plant endogenous peptide released into the apoplast) perceived by MIK2 in a BAK1/SERK3 and SERK4 coreceptors-dependent manner, that modulates various physiological and antimicrobial processes including growth prevention and reactive oxygen species (ROS) response regulation. Inhibits root growth. This is Serine rich endogenous peptide 6 from Arabidopsis thaliana (Mouse-ear cress).